Consider the following 547-residue polypeptide: Chaperonin GroEL (547 aa).

ATP contacts are provided by residues 29–32, 86–90, G413, and D498; these read TLGP and DGTTT.

The protein belongs to the chaperonin (HSP60) family. In terms of assembly, forms a cylinder of 14 subunits composed of two heptameric rings stacked back-to-back. Interacts with the co-chaperonin GroES.

The protein resides in the cytoplasm. The enzyme catalyses ATP + H2O + a folded polypeptide = ADP + phosphate + an unfolded polypeptide.. In terms of biological role, together with its co-chaperonin GroES, plays an essential role in assisting protein folding. The GroEL-GroES system forms a nano-cage that allows encapsulation of the non-native substrate proteins and provides a physical environment optimized to promote and accelerate protein folding. The chain is Chaperonin GroEL from Herpetosiphon aurantiacus (strain ATCC 23779 / DSM 785 / 114-95).